A 534-amino-acid polypeptide reads, in one-letter code: GMP synthase [glutamine-hydrolyzing] (534 aa).

The region spanning 4-202 (KILILDFGSQ…VLEIAKAQPD (199 aa)) is the Glutamine amidotransferase type-1 domain. The active-site Nucleophile is the C81. Catalysis depends on residues H176 and E178. The region spanning 203–402 (WVMKDHVAEA…LGLPHDMVYR (200 aa)) is the GMPS ATP-PPase domain. 230–236 (SGGVDSS) contacts ATP.

In terms of assembly, homodimer.

The enzyme catalyses XMP + L-glutamine + ATP + H2O = GMP + L-glutamate + AMP + diphosphate + 2 H(+). Its pathway is purine metabolism; GMP biosynthesis; GMP from XMP (L-Gln route): step 1/1. Functionally, catalyzes the synthesis of GMP from XMP. The polypeptide is GMP synthase [glutamine-hydrolyzing] (Methylibium petroleiphilum (strain ATCC BAA-1232 / LMG 22953 / PM1)).